A 635-amino-acid chain; its full sequence is Sodium- and chloride-dependent transporter XTRP3B (635 aa).

A disordered region spans residues 1 to 38 (MESPSAHAVSLPEDEELQPWGGAGGPGQHPGRPRSTEC). The Cytoplasmic segment spans residues 1-56 (MESPSAHAVSLPEDEELQPWGGAGGPGQHPGRPRSTECAHPGVVEKVRPKWDNPLQ). A helical transmembrane segment spans residues 57 to 77 (FLLVCISYAVGLGNVWRFPYL). Over 78–85 (CQMYGGGN) the chain is Extracellular. The chain crosses the membrane as a helical span at residues 86–106 (FLVPYIIMLIVEGMPLLYLEL). Topologically, residues 107 to 127 (AVGQRMRQGSIGAWRTISPYL) are cytoplasmic. A helical transmembrane segment spans residues 128–148 (SGVGIASLVVSFLASVYFNVI). The Extracellular portion of the chain corresponds to 149-208 (NTWALWYLFHSFQDPLPWSVCPLNSNHTGYDEECEKASSTQYFWYRKTLNISPSIQENGG). Asparagine 174 is a glycosylation site (N-linked (GlcNAc...) asparagine). Residues 209-229 (VQWEPALCLTLAWLMVYLCIL) traverse the membrane as a helical segment. Topologically, residues 230–237 (RGTESTGK) are cytoplasmic. The helical transmembrane segment at 238–258 (VVYFTTSLPYFVLIIYLVRGL) threads the bilayer. The Extracellular portion of the chain corresponds to 259–284 (TLHGATNGLAYMFTPKIEQLANPKAW). A helical membrane pass occupies residues 285–305 (INAATQIFFSLGLGCGGLIAF). The Cytoplasmic segment spans residues 306–319 (ASYNEPSNDCQKHA). A helical transmembrane segment spans residues 320 to 340 (LIVSVINSTTAIFSSIVTFSI). At 341 to 432 (YGFKATFNYE…EAIKNMEVSQ (92 aa)) the chain is on the extracellular side. N-linked (GlcNAc...) asparagine glycosylation is present at asparagine 400. The chain crosses the membrane as a helical span at residues 433–453 (LWSVLYFFMLLTLGMGSMVGT). Topologically, residues 454-474 (GTAILTPLTDSKIISSYLPKE) are cytoplasmic. Residues 475-495 (AISGLVCLLNCAIGMVFTMEA) form a helical membrane-spanning segment. Over 496–508 (GNYWFDLFNDYTA) the chain is Extracellular. A helical membrane pass occupies residues 509-529 (TLSLLLIVLVETIAVCYVYGL). Topologically, residues 530–547 (KRFESDLRAMTGRTLSWY) are cytoplasmic. A helical transmembrane segment spans residues 548–568 (WKVMWAFVSPLLIVGLFIFYL). At 569-597 (SDYILTGTLQYQAWDATQGHVVTKDYPTY) the chain is on the extracellular side. Residues 598 to 618 (ALAVIGLLVASSTMCIPLVAL) form a helical membrane-spanning segment. Topologically, residues 619-635 (GTFVTRHFKIREQFSAA) are cytoplasmic.

Belongs to the sodium:neurotransmitter symporter (SNF) (TC 2.A.22) family. SLC6A20 subfamily. In terms of assembly, interacts with CLTRN. In terms of tissue distribution, detected only in kidney and lung.

It is found in the apical cell membrane. Does not show transporter activity with a range of tested amino acids including proline, glutamine, glutamic acid, leucine, alanine, histidine, glycine and arginine. The polypeptide is Sodium- and chloride-dependent transporter XTRP3B (Slc6a20b) (Mus musculus (Mouse)).